Consider the following 35-residue polypeptide: Photosystem II reaction center protein T (35 aa).

The chain crosses the membrane as a helical span at residues 3–23 (ALVYTFLLVSTLGIIFFAIFF).

It belongs to the PsbT family. In terms of assembly, PSII is composed of 1 copy each of membrane proteins PsbA, PsbB, PsbC, PsbD, PsbE, PsbF, PsbH, PsbI, PsbJ, PsbK, PsbL, PsbM, PsbT, PsbY, PsbZ, Psb30/Ycf12, at least 3 peripheral proteins of the oxygen-evolving complex and a large number of cofactors. It forms dimeric complexes.

The protein localises to the plastid. Its subcellular location is the chloroplast thylakoid membrane. In terms of biological role, found at the monomer-monomer interface of the photosystem II (PS II) dimer, plays a role in assembly and dimerization of PSII. PSII is a light-driven water plastoquinone oxidoreductase, using light energy to abstract electrons from H(2)O, generating a proton gradient subsequently used for ATP formation. This is Photosystem II reaction center protein T from Cycas revoluta (Sago palm).